A 388-amino-acid chain; its full sequence is L-arabinitol 4-dehydrogenase (388 aa).

8 residues coordinate Zn(2+): C55, H80, E81, C110, C113, C116, C124, and E165. Residues P192 to I193, D213, R218, I293, and Q317 to R319 contribute to the NAD(+) site.

The protein belongs to the zinc-containing alcohol dehydrogenase family. Homotetramer. Zn(2+) is required as a cofactor.

The catalysed reaction is L-arabinitol + NAD(+) = L-xylulose + NADH + H(+). It functions in the pathway carbohydrate degradation; L-arabinose degradation via L-arabinitol; D-xylulose 5-phosphate from L-arabinose (fungal route): step 2/5. Functionally, catalyzes the NAD-dependent oxidation of L-arabinitol to L-xylulose in the fungal L-arabinose catabolic pathway. L-arabinose catabolism is important for using plant material as a carbon source. NADP cannot act as a cosubstrate. The polypeptide is L-arabinitol 4-dehydrogenase (lad) (Talaromyces emersonii (Thermophilic fungus)).